Reading from the N-terminus, the 192-residue chain is Probable cobalt-precorrin-6B C(15)-methyltransferase (decarboxylating) (192 aa).

S-adenosyl-L-methionine contacts are provided by residues threonine 20, glycine 44–glycine 48, glutamate 68, and alanine 96.

It belongs to the methyltransferase superfamily. Archaeal-type CbiT family.

It carries out the reaction Co-precorrin-6B + S-adenosyl-L-methionine = Co-precorrin-7 + S-adenosyl-L-homocysteine + CO2. It participates in cofactor biosynthesis; adenosylcobalamin biosynthesis; cob(II)yrinate a,c-diamide from sirohydrochlorin (anaerobic route): step 8/10. Catalyzes the methylation of C-15 in cobalt-precorrin-6B followed by the decarboxylation of C-12 to form cobalt-precorrin-7. The chain is Probable cobalt-precorrin-6B C(15)-methyltransferase (decarboxylating) from Sulfurisphaera tokodaii (strain DSM 16993 / JCM 10545 / NBRC 100140 / 7) (Sulfolobus tokodaii).